The primary structure comprises 714 residues: Rho-GTPase-activating protein RGD2 (714 aa).

An F-BAR domain is found at 2–441 (LSFCDYFWSE…LENDIDPTAD (440 aa)). The DEP domain occupies 218-298 (PKTDYKLPLI…WKNTAYMFAN (81 aa)). One can recognise a Rho-GAP domain in the interval 475-704 (VDLETRCRLD…DLLTHKKQIF (230 aa)).

As to quaternary structure, interacts with CDC42 and RHO5.

In terms of biological role, acts in signal transduction. Activates CDC42 and RHO5. In Saccharomyces cerevisiae (strain ATCC 204508 / S288c) (Baker's yeast), this protein is Rho-GTPase-activating protein RGD2 (RGD2).